The primary structure comprises 1431 residues: Probable ATP-dependent RNA helicase spindle-E (1431 aa).

A Helicase ATP-binding domain is found at 127–294; that stretch reads LAAIRENPVV…FAMSSSLPPV (168 aa). 140-147 serves as a coordination point for ATP; it reads GETGCGKT. Residues 240-243 carry the DEAH box motif; it reads DEVH. A Helicase C-terminal domain is found at 354 to 526; that stretch reads QSQQSYEEAK…NSVLKAKELE (173 aa). A Tudor domain is found at 937–1000; it reads AKAVTKGLQL…RLMSPQLKRD (64 aa).

This sequence belongs to the DEAD box helicase family. DEAH subfamily.

The protein localises to the cytoplasm. The enzyme catalyses ATP + H2O = ADP + phosphate + H(+). In terms of biological role, probable ATP-binding RNA helicase which plays a central role during spermatogenesis and oogenesis by repressing transposable elements and preventing their mobilization, which is essential for the germline integrity. Acts via the piRNA metabolic process, which mediates the repression of transposable elements during meiosis by forming complexes composed of piRNAs and Piwi and govern the methylation and subsequent repression of transposons. Involved in the repression of LTR retrotransposon copia. Also involved in telomere regulation by repressing specialized telomeric retroelements HeT-A, TAHRE, and TART; Drosophila telomeres being maintained by transposition of specialized telomeric retroelements. Involved in telomeric trans-silencing, a repression mechanism by which a transposon or a transgene inserted in subtelomeric heterochromatin has the capacity to repress in trans in the female germline, a homologous transposon, or transgene located in euchromatin. Involved in the repression of testis-expressed Stellate genes by the homologous Su(Ste) repeats. Required for anteroposterior and dorsoventral axis formation during oogenesis. The protein is Probable ATP-dependent RNA helicase spindle-E (spn-E) of Drosophila mojavensis (Fruit fly).